A 207-amino-acid polypeptide reads, in one-letter code: Interleukin-6 (207 aa).

The first 20 residues, 1-20, serve as a signal peptide directing secretion; the sequence is MNSLSTSAFSLGLLLVMATA. Cys67 and Cys73 form a disulfide bridge. Ser76 is modified (phosphoserine). Cys96 and Cys106 form a disulfide bridge.

Belongs to the IL-6 superfamily. In terms of assembly, component of a hexamer of two molecules each of IL6, IL6R and IL6ST; first binds to IL6R to associate with the signaling subunit IL6ST. Interacts with IL6R (via the N-terminal ectodomain); this interaction may be affected by IL6R-binding with SORL1, hence decreasing IL6 cis signaling. Interacts with SORL1 (via the N-terminal ectodomain); this interaction leads to IL6 internalization and lysosomal degradation. May form a trimeric complex with the soluble SORL1 ectodomain and soluble IL6R receptor; this interaction might stabilize circulating IL6, hence promoting IL6 trans signaling.

The protein resides in the secreted. Functionally, cytokine with a wide variety of biological functions in immunity, tissue regeneration, and metabolism. Binds to IL6R, then the complex associates to the signaling subunit IL6ST/gp130 to trigger the intracellular IL6-signaling pathway. The interaction with the membrane-bound IL6R and IL6ST stimulates 'classic signaling', whereas the binding of IL6 and soluble IL6R to IL6ST stimulates 'trans-signaling'. Alternatively, 'cluster signaling' occurs when membrane-bound IL6:IL6R complexes on transmitter cells activate IL6ST receptors on neighboring receiver cells. IL6 is a potent inducer of the acute phase response. Rapid production of IL6 contributes to host defense during infection and tissue injury, but excessive IL6 synthesis is involved in disease pathology. In the innate immune response, is synthesized by myeloid cells, such as macrophages and dendritic cells, upon recognition of pathogens through toll-like receptors (TLRs) at the site of infection or tissue injury. In the adaptive immune response, is required for the differentiation of B cells into immunoglobulin-secreting cells. Plays a major role in the differentiation of CD4(+) T cell subsets. Essential factor for the development of T follicular helper (Tfh) cells that are required for the induction of germinal-center formation. Required to drive naive CD4(+) T cells to the Th17 lineage. Also required for proliferation of myeloma cells and the survival of plasmablast cells. Its function is as follows. Acts as an essential factor in bone homeostasis and on vessels directly or indirectly by induction of VEGF, resulting in increased angiogenesis activity and vascular permeability. Induces, through 'trans-signaling' and synergistically with IL1B and TNF, the production of VEGF. Involved in metabolic controls, is discharged into the bloodstream after muscle contraction increasing lipolysis and improving insulin resistance. 'Trans-signaling' in central nervous system also regulates energy and glucose homeostasis. Mediates, through GLP-1, crosstalk between insulin-sensitive tissues, intestinal L cells and pancreatic islets to adapt to changes in insulin demand. Also acts as a myokine. Plays a protective role during liver injury, being required for maintenance of tissue regeneration. Also has a pivotal role in iron metabolism by regulating HAMP/hepcidin expression upon inflammation or bacterial infection. Through activation of IL6ST-YAP-NOTCH pathway, induces inflammation-induced epithelial regeneration. The protein is Interleukin-6 (IL6) of Vulpes vulpes (Red fox).